A 162-amino-acid chain; its full sequence is UPF0114 protein Sfri_3655 (162 aa).

Helical transmembrane passes span 15-35 (IMAP…IKFF), 53-73 (LVLI…LIMV), and 136-156 (IMWY…MGYL).

The protein belongs to the UPF0114 family.

It is found in the cell membrane. In Shewanella frigidimarina (strain NCIMB 400), this protein is UPF0114 protein Sfri_3655.